Consider the following 537-residue polypeptide: [Pyruvate dehydrogenase [acetyl-transferring]]-phosphatase 1, mitochondrial (537 aa).

The transit peptide at 1–71 directs the protein to the mitochondrion; sequence MPAPTQLFFP…WWHYTQGRRY (71 aa). One can recognise a PPM-type phosphatase domain in the interval 109–525; sequence ILGFDSNQLP…DDITIIVVQF (417 aa). 2 residues coordinate Mn(2+): D144 and G145. N6-acetyllysine is present on K202. The Mn(2+) site is built by D418 and D516.

The protein belongs to the PP2C family. In terms of assembly, heterodimer of a catalytic (PDP1) and a regulatory (PDPR) subunit. Requires Mn(2+) as cofactor. Mg(2+) serves as cofactor.

Its subcellular location is the mitochondrion. The enzyme catalyses O-phospho-L-seryl-[pyruvate dehydrogenase E1 alpha subunit] + H2O = L-seryl-[pyruvate dehydrogenase E1 alpha subunit] + phosphate. Its activity is regulated as follows. Magnesium-dependent and calcium-stimulated. PDP1 activity strongly depends on its Ca(2+)-dependent binding to the lipoyl domain of E2 subunit of component of the pyruvate dehydrogenase complex. Functionally, mitochondrial enzyme that catalyzes the dephosphorylation and concomitant reactivation of the alpha subunit of the E1 component of the pyruvate dehydrogenase complex (PDC), thereby stimulating the conversion of pyruvate into acetyl-CoA. The polypeptide is [Pyruvate dehydrogenase [acetyl-transferring]]-phosphatase 1, mitochondrial (PDP1) (Pongo abelii (Sumatran orangutan)).